The following is a 419-amino-acid chain: L-rhamnose isomerase (419 aa).

Mn(2+)-binding residues include His262, Asp294, and Asp296.

This sequence belongs to the rhamnose isomerase family. As to quaternary structure, homotetramer. It depends on Mn(2+) as a cofactor.

It localises to the cytoplasm. It carries out the reaction L-rhamnopyranose = L-rhamnulose. It participates in carbohydrate degradation; L-rhamnose degradation; glycerone phosphate from L-rhamnose: step 1/3. Catalyzes the interconversion of L-rhamnose and L-rhamnulose. This chain is L-rhamnose isomerase, found in Shigella flexneri serotype 5b (strain 8401).